A 48-amino-acid polypeptide reads, in one-letter code: Small, acid-soluble spore protein P (48 aa).

A compositionally biased stretch (basic and acidic residues) spans 1–12 (MTNKNDGKDMRK). The segment at 1–48 (MTNKNDGKDMRKNAPKGDNPGQPEPLDGSKKVKNRNHTRQKHNTSHDM) is disordered. Residues 31–48 (KVKNRNHTRQKHNTSHDM) are compositionally biased toward basic residues.

The protein belongs to the SspP family.

Its subcellular location is the spore core. The chain is Small, acid-soluble spore protein P from Geobacillus kaustophilus (strain HTA426).